The sequence spans 87 residues: MYVVIVYDVGVERVNKVRSFLREYMNWVQNSVFEGELTKAEFLKIKSRLKELIQESSDHIIFYSSRDRKYLGIEDLGTPKADTSNII.

Residue Asp8 participates in Mg(2+) binding.

Belongs to the CRISPR-associated endoribonuclease Cas2 protein family. Homodimer, forms a heterotetramer with a Cas1 homodimer. Requires Mg(2+) as cofactor.

In terms of biological role, CRISPR (clustered regularly interspaced short palindromic repeat), is an adaptive immune system that provides protection against mobile genetic elements (viruses, transposable elements and conjugative plasmids). CRISPR clusters contain sequences complementary to antecedent mobile elements and target invading nucleic acids. CRISPR clusters are transcribed and processed into CRISPR RNA (crRNA). Functions as a ssRNA-specific endoribonuclease. Involved in the integration of spacer DNA into the CRISPR cassette. The chain is CRISPR-associated endoribonuclease Cas2 from Methanosarcina acetivorans (strain ATCC 35395 / DSM 2834 / JCM 12185 / C2A).